Here is a 391-residue protein sequence, read N- to C-terminus: Formate-dependent phosphoribosylglycinamide formyltransferase (391 aa).

Residues 18 to 19 and Glu-78 each bind N(1)-(5-phospho-beta-D-ribosyl)glycinamide; that span reads EL. ATP contacts are provided by residues Arg-110, Lys-151, 156 to 161, 191 to 194, and Glu-199; these read SSGKGQ and EEFI. One can recognise an ATP-grasp domain in the interval 115-305; the sequence is ELAAQQLGVR…EFELHLRAIL (191 aa). 2 residues coordinate Mg(2+): Glu-264 and Glu-276. N(1)-(5-phospho-beta-D-ribosyl)glycinamide-binding positions include Asp-283, Lys-353, and 360-361; that span reads RR.

It belongs to the PurK/PurT family. In terms of assembly, homodimer.

It catalyses the reaction N(1)-(5-phospho-beta-D-ribosyl)glycinamide + formate + ATP = N(2)-formyl-N(1)-(5-phospho-beta-D-ribosyl)glycinamide + ADP + phosphate + H(+). It functions in the pathway purine metabolism; IMP biosynthesis via de novo pathway; N(2)-formyl-N(1)-(5-phospho-D-ribosyl)glycinamide from N(1)-(5-phospho-D-ribosyl)glycinamide (formate route): step 1/1. Functionally, involved in the de novo purine biosynthesis. Catalyzes the transfer of formate to 5-phospho-ribosyl-glycinamide (GAR), producing 5-phospho-ribosyl-N-formylglycinamide (FGAR). Formate is provided by PurU via hydrolysis of 10-formyl-tetrahydrofolate. The sequence is that of Formate-dependent phosphoribosylglycinamide formyltransferase from Synechocystis sp. (strain ATCC 27184 / PCC 6803 / Kazusa).